The sequence spans 416 residues: UDP-N-acetylglucosamine 1-carboxyvinyltransferase (416 aa).

Phosphoenolpyruvate is bound at residue 22-23 (KN). A UDP-N-acetyl-alpha-D-glucosamine-binding site is contributed by R92. Catalysis depends on C116, which acts as the Proton donor. The residue at position 116 (C116) is a 2-(S-cysteinyl)pyruvic acid O-phosphothioketal. Residues 121–125 (RPVDQ), D304, and I326 each bind UDP-N-acetyl-alpha-D-glucosamine.

This sequence belongs to the EPSP synthase family. MurA subfamily.

It localises to the cytoplasm. It catalyses the reaction phosphoenolpyruvate + UDP-N-acetyl-alpha-D-glucosamine = UDP-N-acetyl-3-O-(1-carboxyvinyl)-alpha-D-glucosamine + phosphate. It participates in cell wall biogenesis; peptidoglycan biosynthesis. In terms of biological role, cell wall formation. Adds enolpyruvyl to UDP-N-acetylglucosamine. The chain is UDP-N-acetylglucosamine 1-carboxyvinyltransferase from Cupriavidus taiwanensis (strain DSM 17343 / BCRC 17206 / CCUG 44338 / CIP 107171 / LMG 19424 / R1) (Ralstonia taiwanensis (strain LMG 19424)).